A 438-amino-acid chain; its full sequence is MGNNVVVLGTQWGDEGKGKIVDLLTEDAKYVVRYQGGHNAGHTLVIDGEKTVLHLIPSGILRDNVKCVIGNGVVLSPEALLKEMKPLEERGIPVRERLFISEACPLILPYHVAMDQAREIARGKKAIGTTGRGIGPAYEDKVARRGLRVGDLFDMEAFAEKLKEVMEYHNFQLVNFYKAEPVSYEAVLEEAKGYAELLTSMVIDVTDELDAARKRGDKIMFEGAQGTLLDIDHGTYPYVTSSNTTAGGVAAGSGFGPRHIGYILGIAKAYCTRVGAGPFPTELYDGLEKQDPVGKHLGTVGHEFGATTGRLRRTGWFDAVAMRRAIQINSVSGFCLTKLDVLDGLEELKICTGYKMEDGSVLEVSPMAAEAFEKATPIYETMPGWSENTFGAKSLDALPQAALNYIKRIEELTGVPVDIISTGPDRNETIIKVHPFEA.

GTP-binding positions include 13 to 19 (GDEGKGK) and 41 to 43 (GHT). Asp-14 serves as the catalytic Proton acceptor. Mg(2+)-binding residues include Asp-14 and Gly-41. Residues 14–17 (DEGK), 39–42 (NAGH), Thr-130, Arg-144, Gln-225, Thr-240, and Arg-310 contribute to the IMP site. The active-site Proton donor is His-42. 306–312 (ATTGRLR) contributes to the substrate binding site. Residues Arg-312, 338–340 (KLD), and 421–423 (STG) each bind GTP.

It belongs to the adenylosuccinate synthetase family. As to quaternary structure, homodimer. Mg(2+) is required as a cofactor.

It is found in the cytoplasm. The catalysed reaction is IMP + L-aspartate + GTP = N(6)-(1,2-dicarboxyethyl)-AMP + GDP + phosphate + 2 H(+). Its pathway is purine metabolism; AMP biosynthesis via de novo pathway; AMP from IMP: step 1/2. In terms of biological role, plays an important role in the de novo pathway of purine nucleotide biosynthesis. Catalyzes the first committed step in the biosynthesis of AMP from IMP. The sequence is that of Adenylosuccinate synthetase from Vibrio parahaemolyticus serotype O3:K6 (strain RIMD 2210633).